We begin with the raw amino-acid sequence, 282 residues long: Aquaporin-6 (282 aa).

At Met1–Arg25 the chain is on the cytoplasmic side. Residues Ala26–Met46 traverse the membrane as a helical segment. Over Arg47 to Ser54 the chain is Extracellular. A helical membrane pass occupies residues Val55–Thr73. Residues Trp74–Gly78 are Cytoplasmic-facing. The discontinuously helical intramembrane region spans Ala79 to Ala88. Positions Asn82–Ala84 match the NPA 1 motif. Topologically, residues Phe89–Arg99 are cytoplasmic. The helical transmembrane segment at Ala100 to Val121 threads the bilayer. At Met122–Thr141 the chain is on the extracellular side. Residues Gly142–Ser162 form a helical membrane-spanning segment. At Thr163–Thr168 the chain is on the cytoplasmic side. Residues Ser169–Ile188 traverse the membrane as a helical segment. Residues His189 to Gly192 are Extracellular-facing. Residues Cys193–Ile205 constitute an intramembrane region (discontinuously helical). The NPA 2 motif lies at Asn196–Ala198. Topologically, residues Ile206–His213 are extracellular. The helical transmembrane segment at Trp214–Val234 threads the bilayer. At Leu235–Val282 the chain is on the cytoplasmic side. Residues Gly260–Val282 form a disordered region.

It belongs to the MIP/aquaporin (TC 1.A.8) family. As to quaternary structure, homotetramer; each monomer provides an independent solute pore.

The protein localises to the cytoplasmic vesicle membrane. The catalysed reaction is nitrate(in) = nitrate(out). It carries out the reaction iodide(out) = iodide(in). It catalyses the reaction bromide(in) = bromide(out). The enzyme catalyses chloride(in) = chloride(out). The catalysed reaction is Na(+)(in) = Na(+)(out). It carries out the reaction H2O(in) = H2O(out). It catalyses the reaction CO2(out) = CO2(in). The enzyme catalyses NH4(+)(in) = NH4(+)(out). Functionally, aquaporins form homotetrameric transmembrane channels, with each monomer independently mediating water transport across the plasma membrane along its osmotic gradient. Unlike classical aquaporins, AQP6 is an intracellular channel with selective anion permeability, particularly for nitrate, and exhibits very low water permeability. It may also facilitate the transport of gases, such as CO2 and NH4(+), as demonstrated in vitro. The chain is Aquaporin-6 from Homo sapiens (Human).